Reading from the N-terminus, the 140-residue chain is Small ribosomal subunit protein uS12 (140 aa).

Disordered stretches follow at residues 1-20 and 35-55; these read MPTI…VKSD and QTNV…TMTP. Position 102 is a 3-methylthioaspartic acid (aspartate 102). The tract at residues 121 to 140 is disordered; the sequence is DGRMQGRSKYGTKRPKAAKK. Basic residues predominate over residues 130–140; it reads YGTKRPKAAKK.

This sequence belongs to the universal ribosomal protein uS12 family. Part of the 30S ribosomal subunit. Contacts proteins S8 and S17. May interact with IF1 in the 30S initiation complex.

Functionally, with S4 and S5 plays an important role in translational accuracy. Its function is as follows. Interacts with and stabilizes bases of the 16S rRNA that are involved in tRNA selection in the A site and with the mRNA backbone. Located at the interface of the 30S and 50S subunits, it traverses the body of the 30S subunit contacting proteins on the other side and probably holding the rRNA structure together. The combined cluster of proteins S8, S12 and S17 appears to hold together the shoulder and platform of the 30S subunit. This is Small ribosomal subunit protein uS12 from Exiguobacterium sp. (strain ATCC BAA-1283 / AT1b).